We begin with the raw amino-acid sequence, 284 residues long: Co-chaperone protein DjlA (284 aa).

The Periplasmic portion of the chain corresponds to 1–6; it reads MHIFGK. A helical transmembrane segment spans residues 7 to 30; sequence ILGAFFGFLFGGPFGAIFGIFLGH. At 31–284 the chain is on the cytoplasmic side; the sequence is QFDKARRLNQ…ELIRKEKGIK (254 aa). Positions 190-211 are disordered; the sequence is QGGGFGGSQQQSHSGQQWQQPS. The segment covering 197–211 has biased composition (low complexity); the sequence is SQQQSHSGQQWQQPS. Residues 218–284 enclose the J domain; the sequence is DAYEVLGVSE…ELIRKEKGIK (67 aa).

As to quaternary structure, homodimer.

The protein resides in the cell inner membrane. Its function is as follows. Regulatory DnaK co-chaperone. Direct interaction between DnaK and DjlA is needed for the induction of the wcaABCDE operon, involved in the synthesis of a colanic acid polysaccharide capsule, possibly through activation of the RcsB/RcsC phosphotransfer signaling pathway. The colanic acid capsule may help the bacterium survive conditions outside the host. The polypeptide is Co-chaperone protein DjlA (Vibrio cholerae serotype O1 (strain ATCC 39315 / El Tor Inaba N16961)).